Reading from the N-terminus, the 220-residue chain is GTP-binding nuclear protein GSP2/CNR2 (220 aa).

Serine 2 carries the post-translational modification N-acetylserine. Serine 2 is subject to Phosphoserine. The Small GTPase Ran-type domain occupies 10–174 (EVPTFKLVLV…LWLARKLAGN (165 aa)). 21–28 (DGGTGKTT) contacts GTP. The segment at 40 to 48 (KKYIATIGV) is switch-I. Residues glycine 71, 125-128 (NKVD), and 153-155 (SAK) contribute to the GTP site. The tract at residues 71 to 87 (GQEKFGGLRDGYYINAQ) is switch-II.

Belongs to the small GTPase superfamily. Ran family. Found in a nuclear export complex with RanGTP, exportin and pre-miRNA.

It localises to the nucleus. Functionally, GTP-binding protein involved in nucleocytoplasmic transport. Required for the import of protein into the nucleus and also for RNA export. Not essential for cell viability. The chain is GTP-binding nuclear protein GSP2/CNR2 (GSP2) from Saccharomyces cerevisiae (strain ATCC 204508 / S288c) (Baker's yeast).